The following is a 105-amino-acid chain: Replication initiation control protein YabA (105 aa).

Positions 79, 81, 95, and 98 each coordinate Zn(2+).

It belongs to the YabA family. In terms of assembly, homotetramer. Interacts with both DnaA and DnaN, acting as a bridge between these two proteins. It depends on Zn(2+) as a cofactor.

It localises to the cytoplasm. Its subcellular location is the nucleoid. Functionally, involved in control of chromosome replication initiation. Inhibits the cooperative binding of DnaA to the oriC region, thus negatively regulating initiation of chromosome replication. Inhibits the ability of DnaA-ATP to form a helix on DNA; does not disassemble preformed DnaA-DNA helices. Decreases the residence time of DnaA on the chromosome at its binding sites (oriC, replication forks and promoter-binding sites). Tethers DnaA to the replication machinery via the DNA polymerase beta sliding clamp subunit (dnaN). Associates with oriC and other DnaA targets on the chromosome in a DnaA-dependent manner. This is Replication initiation control protein YabA from Streptococcus suis (strain 98HAH33).